The following is an 811-amino-acid chain: Mitochondrial intermediate peptidase (811 aa).

The N-terminal 25 residues, 1–25, are a transit peptide targeting the mitochondrion; the sequence is MRSGSRLSNYLVRLSGRVSFTQKRS. The disordered stretch occupies residues 423–450; sequence TENGEKASTDTSTSTTTSTTTTDSTTTT. Residues 431-450 are compositionally biased toward low complexity; that stretch reads TDTSTSTTTSTTTTDSTTTT. His-593 contributes to the Zn(2+) binding site. Glu-594 is a catalytic residue. His-597 and His-600 together coordinate Zn(2+).

Belongs to the peptidase M3 family. It depends on Zn(2+) as a cofactor.

The protein localises to the mitochondrion matrix. The enzyme catalyses Release of an N-terminal octapeptide as second stage of processing of some proteins imported into the mitochondrion.. Functionally, cleaves proteins, imported into the mitochondrion, to their mature size. While most mitochondrial precursor proteins are processed to the mature form in one step by mitochondrial processing peptidase (MPP), the sequential cleavage by MIP of an octapeptide after initial processing by MPP is a required step for a subgroup of nuclear-encoded precursor proteins destined for the matrix or the inner membrane. This Lodderomyces elongisporus (strain ATCC 11503 / CBS 2605 / JCM 1781 / NBRC 1676 / NRRL YB-4239) (Yeast) protein is Mitochondrial intermediate peptidase (OCT1).